Reading from the N-terminus, the 87-residue chain is Defensin alpha-like protein 1 (87 aa).

An N-terminal signal peptide occupies residues 1 to 19 (MKTLILLSALVLLALQVQA). Residues 20–56 (DPIQEAEEETKTEEQPADEDQDVSVSFEGPEASAVQD) constitute a propeptide that is removed on maturation. A compositionally biased stretch (acidic residues) spans 23-41 (QEAEEETKTEEQPADEDQD). Positions 23–43 (QEAEEETKTEEQPADEDQDVS) are disordered.

The protein belongs to the alpha-defensin family. As to quaternary structure, antiparallel homodimer; disulfide-linked. Specifically expressed in small intestine (jejunum and ileum). Probably expressed by Paneth cells at the base of intestinal crypts. Coexpressed with MMP7 in small intestine.

It is found in the secreted. In terms of biological role, intestinal defense peptide. Has potent antibacterial activity against Gram-negative bacteria E.coli O157:H7, S.typhimurium DT104, and K.pneumoniae; and against Gram-positive bacteria S.aureus, methicillin-resistant S.aureus and L.monocytogenes. Remains active in the presence of NaCl and Mg(2+). Probably functions by disrupting bacterial membrane integrity. However, does not show cytotoxic activity towards human intestinal cells. The chain is Defensin alpha-like protein 1 from Rattus norvegicus (Rat).